The sequence spans 421 residues: Galactooligosaccharide-binding protein (421 aa).

The signal sequence occupies residues 1–22; it reads MKMAKKCSVFMLCAAVSLSLAA. Cys-23 carries the N-palmitoyl cysteine lipid modification. The S-diacylglycerol cysteine moiety is linked to residue Cys-23. The tract at residues 393–421 is disordered; that stretch reads ATGKADPKQALDQAAETAKGQIKAKHSGK.

Belongs to the bacterial solute-binding protein 1 family. As to quaternary structure, the complex is composed of two ATP-binding proteins (MsmX), two transmembrane proteins (GanP and GanQ) and a solute-binding protein (GanS).

It is found in the cell membrane. Functionally, involved in galactan degradation. Part of the ABC transporter complex GanPQS involved in the uptake of galactooligosaccharides. Binds mainly galactotetraose and galactotriose. The protein is Galactooligosaccharide-binding protein of Bacillus subtilis (strain 168).